We begin with the raw amino-acid sequence, 572 residues long: MARILITSAIPYINGIKHLGNLVGSQLPADLYARYQRGRGNEVMFLCATDEHGTPAELAAAKAGKPVAEYCAEMHGVQADIARRFGLSFDHFGRSSSAQNHKLTQHFAGKLAENDLIREVSERQVYSNADGRFLPDRYIEGTCPNCGYDKARGDQCENCTKQLDPTDLIEPRSAISGSTDLEVRETKHLYLRQSALKDQLDAWIDSKADWPVLTTSIAKKWLHDGDGLQDRGITRDLDWGIPVKKGEQDWPGMEGKVFYVWFDAPIEYIACAGEWAEAHGKSDAEWERWWRTDKGADDVRYVQFMGKDNVPFHTLSFPATLIGSGEPWKMVDHLKSFNYLNYDGGQFSTSQGRGVFMDQALEILPADYWRWWLLSHAPENSDSEFTWENFQASVNKDLADVLGNFVSRITKFCRSKFGEEVPEGGAYGPQEEALIAELTTRLRAYEGHMEAMEVRKSAQELRAIWAAGNEYLQSAAPWTLFKTDPVQAAAQVRLGLNLIRLYAVLSAPFIPAASARMLEAMQTSDDNWPVDIATALNALAPGHAFTVPEVLFAKISDEDREGWQQRFAGVRS.

A 'HIGH' region motif is present at residues Pro11–Asn21. Residues Cys143, Cys146, Cys156, and Cys159 each coordinate Zn(2+). Residues Gln346–Ser350 carry the 'KMSKS' region motif. Thr349 is a binding site for ATP.

It belongs to the class-I aminoacyl-tRNA synthetase family. MetG type 1 subfamily. In terms of assembly, monomer. Zn(2+) serves as cofactor.

The protein localises to the cytoplasm. The catalysed reaction is tRNA(Met) + L-methionine + ATP = L-methionyl-tRNA(Met) + AMP + diphosphate. Is required not only for elongation of protein synthesis but also for the initiation of all mRNA translation through initiator tRNA(fMet) aminoacylation. The polypeptide is Methionine--tRNA ligase (Ruegeria pomeroyi (strain ATCC 700808 / DSM 15171 / DSS-3) (Silicibacter pomeroyi)).